The following is a 305-amino-acid chain: Glycine--tRNA ligase alpha subunit (305 aa).

The protein belongs to the class-II aminoacyl-tRNA synthetase family. Tetramer of two alpha and two beta subunits.

It localises to the cytoplasm. The enzyme catalyses tRNA(Gly) + glycine + ATP = glycyl-tRNA(Gly) + AMP + diphosphate. The protein is Glycine--tRNA ligase alpha subunit of Streptococcus pyogenes serotype M2 (strain MGAS10270).